The following is a 202-amino-acid chain: Adenosylcobalamin/alpha-ribazole phosphatase (202 aa).

The active-site Tele-phosphohistidine intermediate is the H8. The active-site Proton donor/acceptor is the E81.

It belongs to the phosphoglycerate mutase family.

It catalyses the reaction adenosylcob(III)alamin 5'-phosphate + H2O = adenosylcob(III)alamin + phosphate. The catalysed reaction is alpha-ribazole 5'-phosphate + H2O = alpha-ribazole + phosphate. Its pathway is nucleoside biosynthesis; alpha-ribazole biosynthesis; alpha-ribazole from 5,6-dimethylbenzimidazole: step 2/2. Functionally, catalyzes the conversion of adenosylcobalamin 5'-phosphate to adenosylcobalamin (vitamin B12); involved in the assembly of the nucleotide loop of cobalamin. Also catalyzes the hydrolysis of the phospho group from alpha-ribazole 5'-phosphate to form alpha-ribazole. The polypeptide is Adenosylcobalamin/alpha-ribazole phosphatase (cobC) (Salmonella typhi).